The following is a 382-amino-acid chain: Glutamyl-tRNA reductase (382 aa).

Substrate is bound by residues 38 to 41 (TCNR), Ser-85, 90 to 92 (ENQ), and Gln-96. Catalysis depends on Cys-39, which acts as the Nucleophile. Residue 164-169 (GAGEIG) participates in NADP(+) binding.

It belongs to the glutamyl-tRNA reductase family. Homodimer.

The enzyme catalyses (S)-4-amino-5-oxopentanoate + tRNA(Glu) + NADP(+) = L-glutamyl-tRNA(Glu) + NADPH + H(+). It participates in porphyrin-containing compound metabolism; protoporphyrin-IX biosynthesis; 5-aminolevulinate from L-glutamyl-tRNA(Glu): step 1/2. Its function is as follows. Catalyzes the NADPH-dependent reduction of glutamyl-tRNA(Glu) to glutamate 1-semialdehyde (GSA). The protein is Glutamyl-tRNA reductase of Methanococcus maripaludis (strain DSM 14266 / JCM 13030 / NBRC 101832 / S2 / LL).